Reading from the N-terminus, the 204-residue chain is MATDKITRDVQSEIYEFIRQEVLDKGYPPSVREICAKVGLSSTSTVHGHLSRLEKKGLIRRDPTKPRAIELIKDPISKREMIDIPIVGKVQAGQPILAVENIDDYLTIPLNFVRNTNDLFILKISGNSMIEAGIYDGDLAIIEKTNYAQNGDIVVALIENDATIKRFFKEKDKIRLQPENHTMDPIIVDNCEVIGKLAGIYRRY.

Residues Val-31–Ser-51 constitute a DNA-binding region (H-T-H motif). Active-site for autocatalytic cleavage activity residues include Ser-128 and Lys-165.

It belongs to the peptidase S24 family. Homodimer.

The enzyme catalyses Hydrolysis of Ala-|-Gly bond in repressor LexA.. Represses a number of genes involved in the response to DNA damage (SOS response), including recA and lexA. In the presence of single-stranded DNA, RecA interacts with LexA causing an autocatalytic cleavage which disrupts the DNA-binding part of LexA, leading to derepression of the SOS regulon and eventually DNA repair. This Clostridium acetobutylicum (strain ATCC 824 / DSM 792 / JCM 1419 / IAM 19013 / LMG 5710 / NBRC 13948 / NRRL B-527 / VKM B-1787 / 2291 / W) protein is LexA repressor.